The sequence spans 287 residues: Ribosomal RNA small subunit methyltransferase A (287 aa).

6 residues coordinate S-adenosyl-L-methionine: N28, L30, G55, E77, D103, and N123.

Belongs to the class I-like SAM-binding methyltransferase superfamily. rRNA adenine N(6)-methyltransferase family. RsmA subfamily.

The protein resides in the cytoplasm. The enzyme catalyses adenosine(1518)/adenosine(1519) in 16S rRNA + 4 S-adenosyl-L-methionine = N(6)-dimethyladenosine(1518)/N(6)-dimethyladenosine(1519) in 16S rRNA + 4 S-adenosyl-L-homocysteine + 4 H(+). Its function is as follows. Specifically dimethylates two adjacent adenosines (A1518 and A1519) in the loop of a conserved hairpin near the 3'-end of 16S rRNA in the 30S particle. May play a critical role in biogenesis of 30S subunits. The sequence is that of Ribosomal RNA small subunit methyltransferase A from Nitrobacter winogradskyi (strain ATCC 25391 / DSM 10237 / CIP 104748 / NCIMB 11846 / Nb-255).